The following is a 100-amino-acid chain: NADH-quinone oxidoreductase subunit K (100 aa).

Helical transmembrane passes span 4–24 (TSYY…GVLL), 29–49 (IVIF…LVAF), and 61–81 (IVFF…ALLV).

This sequence belongs to the complex I subunit 4L family. In terms of assembly, NDH-1 is composed of 14 different subunits. Subunits NuoA, H, J, K, L, M, N constitute the membrane sector of the complex.

It is found in the cell membrane. It catalyses the reaction a quinone + NADH + 5 H(+)(in) = a quinol + NAD(+) + 4 H(+)(out). In terms of biological role, NDH-1 shuttles electrons from NADH, via FMN and iron-sulfur (Fe-S) centers, to quinones in the respiratory chain. The immediate electron acceptor for the enzyme in this species is believed to be ubiquinone. Couples the redox reaction to proton translocation (for every two electrons transferred, four hydrogen ions are translocated across the cytoplasmic membrane), and thus conserves the redox energy in a proton gradient. The chain is NADH-quinone oxidoreductase subunit K from Chloroflexus aggregans (strain MD-66 / DSM 9485).